The primary structure comprises 100 residues: Small ribosomal subunit protein uS14c (100 aa).

This sequence belongs to the universal ribosomal protein uS14 family. As to quaternary structure, part of the 30S ribosomal subunit.

Its subcellular location is the plastid. It is found in the chloroplast. Functionally, binds 16S rRNA, required for the assembly of 30S particles. This Ceratophyllum demersum (Rigid hornwort) protein is Small ribosomal subunit protein uS14c.